An 861-amino-acid polypeptide reads, in one-letter code: Leucine--tRNA ligase (861 aa).

Residues 42 to 52 (PYPSGKLHMGH) carry the 'HIGH' region motif. A 'KMSKS' region motif is present at residues 619-623 (KMSKS). Residue Lys622 coordinates ATP.

This sequence belongs to the class-I aminoacyl-tRNA synthetase family.

Its subcellular location is the cytoplasm. The enzyme catalyses tRNA(Leu) + L-leucine + ATP = L-leucyl-tRNA(Leu) + AMP + diphosphate. The chain is Leucine--tRNA ligase from Actinobacillus pleuropneumoniae serotype 5b (strain L20).